The following is a 155-amino-acid chain: Transcription antitermination protein NusB (155 aa).

The protein belongs to the NusB family.

Its function is as follows. Involved in transcription antitermination. Required for transcription of ribosomal RNA (rRNA) genes. Binds specifically to the boxA antiterminator sequence of the ribosomal RNA (rrn) operons. The chain is Transcription antitermination protein NusB from Ralstonia pickettii (strain 12J).